The following is a 591-amino-acid chain: MKLKVYADRMSQPSRAVLIFCKVNEIQFDEILISLGKRQQLSPEFKEINPMGKVPAIVDGRLKLFESHAILIYLSSAYASVVDHWYPNDLSKRAKIHSVLDWHHTNLRPGASGYVLNSVLAPALGLPLNPKAAAEAENILTNSLSTLETFWLKGSAKFLLGGKQPSIADLSLVCELMQLQVLDDKDRLRLLSPHKKVEQWIESTRKATMPHSDEVHEVLFRAKDRFQKQREMATASKPGPQSKIIQFSSIGGTSDGPNLVQDTTDRKARRRKWSPPDDVILISAWLNTSKDRKVVVYDEQQAHTFWKRIGAHVSNSASLANLPKREWNHCRQRWRKINDYVCKFVGCYDQALNQRASGQSEDDVFQVAYQLYYNNYMSNFKLEHAWRELRHNKKWCSTYTSENSKGGGSSKRTKLNGGGVYSSSCNPESVPIALDGEEQVMDRPLGVKSSKQKEKKVATKTMLEEREADSRSRLENLWVLDEEEQVMDLPLGVKSSKQKERKVATKTMIEEREAANFRSRLGNLWLLKEKEEREADSRSRLENLWALKEKDIEEQKKLTRMEVLKSLLGRRTGETSEKEETLKNKLIDEML.

Residues 1 to 82 enclose the GST N-terminal domain; the sequence is MKLKVYADRM…YLSSAYASVV (82 aa). Residues 11-12, 40-41, 53-54, and 66-67 contribute to the glutathione site; these read SQ, QL, KV, and ES. The 138-residue stretch at 89–226 folds into the GST C-terminal domain; the sequence is DLSKRAKIHS…EVLFRAKDRF (138 aa). The disordered stretch occupies residues 229-272; that stretch reads QREMATASKPGPQSKIIQFSSIGGTSDGPNLVQDTTDRKARRRK. The span at 243-262 shows a compositional bias: polar residues; sequence KIIQFSSIGGTSDGPNLVQD. Residues 265 to 338 form the Myb-like domain; the sequence is DRKARRRKWS…HCRQRWRKIN (74 aa).

Belongs to the GST superfamily. Theta family.

The protein localises to the peroxisome. The catalysed reaction is RX + glutathione = an S-substituted glutathione + a halide anion + H(+). In terms of biological role, may be involved in the conjugation of reduced glutathione to a wide number of exogenous and endogenous hydrophobic electrophiles and have a detoxification role against certain herbicides. The sequence is that of Glutathione S-transferase T2 (GSTT2) from Arabidopsis thaliana (Mouse-ear cress).